The primary structure comprises 141 residues: MPTIAQLIRNKRAPKVKKTKSPALLFTYNSLHKKTTKNPSPLKSGVCTRVGTMTPKKPNSALRKYAKVRLSNGFEVLAYIPGEGHNLQEHSVVVIRGGRVKDLPGVRYHIVRGAGDASGVEKRRQQRSLYGAKRPKKEASK.

Residue Asp102 is modified to 3-methylthioaspartic acid. The segment at 115–141 (GDASGVEKRRQQRSLYGAKRPKKEASK) is disordered.

This sequence belongs to the universal ribosomal protein uS12 family. Part of the 30S ribosomal subunit. Contacts proteins S8 and S17. May interact with IF1 in the 30S initiation complex.

Its function is as follows. With S4 and S5 plays an important role in translational accuracy. Interacts with and stabilizes bases of the 16S rRNA that are involved in tRNA selection in the A site and with the mRNA backbone. Located at the interface of the 30S and 50S subunits, it traverses the body of the 30S subunit contacting proteins on the other side and probably holding the rRNA structure together. The combined cluster of proteins S8, S12 and S17 appears to hold together the shoulder and platform of the 30S subunit. This Ureaplasma parvum serovar 3 (strain ATCC 27815 / 27 / NCTC 11736) protein is Small ribosomal subunit protein uS12.